A 196-amino-acid polypeptide reads, in one-letter code: Large ribosomal subunit protein bL9c (196 aa).

Residues 1–41 (MASTTSTLSLSWSNSFHSFAGAISEPQKSPENCRVMLPIVA) constitute a chloroplast transit peptide.

Component of the chloroplast large ribosomal subunit (LSU). Mature 70S chloroplast ribosomes of higher plants consist of a small (30S) and a large (50S) subunit. The 30S small subunit contains 1 molecule of ribosomal RNA (16S rRNA) and 24 different proteins. The 50S large subunit contains 3 rRNA molecules (23S, 5S and 4.5S rRNA) and 33 different proteins.

It localises to the plastid. Its subcellular location is the chloroplast. Component of the chloroplast ribosome (chloro-ribosome), a dedicated translation machinery responsible for the synthesis of chloroplast genome-encoded proteins, including proteins of the transcription and translation machinery and components of the photosynthetic apparatus. The protein is Large ribosomal subunit protein bL9c (RPL9) of Spinacia oleracea (Spinach).